Here is a 252-residue protein sequence, read N- to C-terminus: Geranylgeranylglyceryl phosphate synthase (252 aa).

D27 and T57 together coordinate Mg(2+). Residues 175–181 (YLEAGSG), 206–207 (GG), and 228–229 (GN) each bind sn-glycerol 1-phosphate.

This sequence belongs to the GGGP/HepGP synthase family. Group II subfamily. Mg(2+) serves as cofactor.

The protein resides in the cytoplasm. It catalyses the reaction sn-glycerol 1-phosphate + (2E,6E,10E)-geranylgeranyl diphosphate = sn-3-O-(geranylgeranyl)glycerol 1-phosphate + diphosphate. It functions in the pathway membrane lipid metabolism; glycerophospholipid metabolism. Functionally, prenyltransferase that catalyzes the transfer of the geranylgeranyl moiety of geranylgeranyl diphosphate (GGPP) to the C3 hydroxyl of sn-glycerol-1-phosphate (G1P). This reaction is the first ether-bond-formation step in the biosynthesis of archaeal membrane lipids. The sequence is that of Geranylgeranylglyceryl phosphate synthase from Metallosphaera sedula (strain ATCC 51363 / DSM 5348 / JCM 9185 / NBRC 15509 / TH2).